The following is an 810-amino-acid chain: Probable dehydratase YbiW (810 aa).

The PFL domain maps to 11–682 (DRIKAHKNAL…QTMATPDGRK (672 aa)). The disordered stretch occupies residues 677–699 (TPDGRKAHTPLAEGASPASGTDH). Residues 689 to 810 (EGASPASGTD…DIIARTEHML (122 aa)) enclose the Glycine radical domain. G786 bears the Glycine radical mark.

This sequence belongs to the glycyl radical enzyme (GRE) family.

Functionally, probably shows dehydratase activity. The protein is Probable dehydratase YbiW (ybiW) of Escherichia coli (strain K12).